We begin with the raw amino-acid sequence, 249 residues long: CDP-diacylglycerol pyrophosphatase (249 aa).

A helical membrane pass occupies residues 5–25 (GYFLLAVIVIVAAAGVGYWKF).

The protein belongs to the Cdh family.

Its subcellular location is the cell inner membrane. The catalysed reaction is a CDP-1,2-diacyl-sn-glycerol + H2O = a 1,2-diacyl-sn-glycero-3-phosphate + CMP + 2 H(+). It functions in the pathway phospholipid metabolism; CDP-diacylglycerol degradation; phosphatidate from CDP-diacylglycerol: step 1/1. The polypeptide is CDP-diacylglycerol pyrophosphatase (Salmonella arizonae (strain ATCC BAA-731 / CDC346-86 / RSK2980)).